A 399-amino-acid chain; its full sequence is 3-dehydroquinate synthase (399 aa).

The protein belongs to the archaeal-type DHQ synthase family.

It catalyses the reaction 2-amino-2,3,7-trideoxy-D-lyxo-hept-6-ulosonate + NAD(+) + H2O = 3-dehydroquinate + NH4(+) + NADH + H(+). Catalyzes the oxidative deamination and cyclization of 2-amino-3,7-dideoxy-D-threo-hept-6-ulosonic acid (ADH) to yield 3-dehydroquinate (DHQ), which is fed into the canonical shikimic pathway of aromatic amino acid biosynthesis. This chain is 3-dehydroquinate synthase, found in Haloquadratum walsbyi (strain DSM 16790 / HBSQ001).